Reading from the N-terminus, the 56-residue chain is Cytochrome b-c1 complex subunit 10 (56 aa).

The Mitochondrial matrix portion of the chain corresponds to 1 to 12; that stretch reads MVTRFLGPRYRE. The helical transmembrane segment at 13-35 threads the bilayer; that stretch reads LVKNWVPTAYTWGAVGAVGLVWA. The Mitochondrial intermembrane portion of the chain corresponds to 36–56; the sequence is TDWRLILDWVPYINGKFKKDN.

Belongs to the UQCR11/QCR10 family. As to quaternary structure, component of the ubiquinol-cytochrome c oxidoreductase (cytochrome b-c1 complex, complex III, CIII), a multisubunit enzyme composed of 11 subunits. The complex is composed of 3 respiratory subunits cytochrome b, cytochrome c1 and Rieske protein UQCRFS1, 2 core protein subunits UQCRC1/QCR1 and UQCRC2/QCR2, and 6 low-molecular weight protein subunits UQCRH/QCR6, UQCRB/QCR7, UQCRQ/QCR8, UQCR10/QCR9, UQCR11/QCR10 and subunit 9, the cleavage product of Rieske protein UQCRFS1. The complex exists as an obligatory dimer and forms supercomplexes (SCs) in the inner mitochondrial membrane with NADH-ubiquinone oxidoreductase (complex I, CI) and cytochrome c oxidase (complex IV, CIV), resulting in different assemblies (supercomplex SCI(1)III(2)IV(1) and megacomplex MCI(2)III(2)IV(2)).

Its subcellular location is the mitochondrion inner membrane. In terms of biological role, component of the ubiquinol-cytochrome c oxidoreductase, a multisubunit transmembrane complex that is part of the mitochondrial electron transport chain which drives oxidative phosphorylation. The respiratory chain contains 3 multisubunit complexes succinate dehydrogenase (complex II, CII), ubiquinol-cytochrome c oxidoreductase (cytochrome b-c1 complex, complex III, CIII) and cytochrome c oxidase (complex IV, CIV), that cooperate to transfer electrons derived from NADH and succinate to molecular oxygen, creating an electrochemical gradient over the inner membrane that drives transmembrane transport and the ATP synthase. The cytochrome b-c1 complex catalyzes electron transfer from ubiquinol to cytochrome c, linking this redox reaction to translocation of protons across the mitochondrial inner membrane, with protons being carried across the membrane as hydrogens on the quinol. In the process called Q cycle, 2 protons are consumed from the matrix, 4 protons are released into the intermembrane space and 2 electrons are passed to cytochrome c. QCR10 has a role in CIII assembly and RIP1 stability. This Homo sapiens (Human) protein is Cytochrome b-c1 complex subunit 10 (UQCR11).